The sequence spans 281 residues: Ribosomal RNA small subunit methyltransferase A (281 aa).

Residues Asn-18, Leu-20, Gly-45, Glu-66, Asp-91, and Asn-118 each coordinate S-adenosyl-L-methionine.

This sequence belongs to the class I-like SAM-binding methyltransferase superfamily. rRNA adenine N(6)-methyltransferase family. RsmA subfamily.

The protein resides in the cytoplasm. The catalysed reaction is adenosine(1518)/adenosine(1519) in 16S rRNA + 4 S-adenosyl-L-methionine = N(6)-dimethyladenosine(1518)/N(6)-dimethyladenosine(1519) in 16S rRNA + 4 S-adenosyl-L-homocysteine + 4 H(+). Specifically dimethylates two adjacent adenosines (A1518 and A1519) in the loop of a conserved hairpin near the 3'-end of 16S rRNA in the 30S particle. May play a critical role in biogenesis of 30S subunits. The protein is Ribosomal RNA small subunit methyltransferase A of Histophilus somni (strain 129Pt) (Haemophilus somnus).